Here is a 278-residue protein sequence, read N- to C-terminus: F-box only protein 17 (278 aa).

The 48-residue stretch at 15–62 folds into the F-box domain; it reads SLALDALPPELLVQVLSHVPPRSLVTRCRPVCRAWRDIVDGPTVWLLQ. Residues 99 to 275 form the FBA domain; the sequence is YCLRAPFGRN…VTHSSVRVRI (177 aa).

In terms of assembly, part of a SCF (SKP1-cullin-F-box) protein ligase complex. Interacts with SKP1 and CUL1. In terms of tissue distribution, expressed in heart, skeletal muscle, liver and kidney. Expressed at lower levels in spleen and brain.

In terms of biological role, substrate-recognition component of the SCF (SKP1-CUL1-F-box protein)-type E3 ubiquitin ligase complex. Able to recognize and bind denatured glycoproteins, which are modified with complex-type oligosaccharides. Also recognizes sulfated glycans. Does not bind high-mannose glycoproteins. The polypeptide is F-box only protein 17 (FBXO17) (Homo sapiens (Human)).